The chain runs to 208 residues: Large ribosomal subunit protein uL3 (208 aa).

The interval 117-149 (GFQGAIKRHGQSRGPMAHGSRYHRRPGSMGPVA) is disordered.

This sequence belongs to the universal ribosomal protein uL3 family. In terms of assembly, part of the 50S ribosomal subunit. Forms a cluster with proteins L14 and L19.

In terms of biological role, one of the primary rRNA binding proteins, it binds directly near the 3'-end of the 23S rRNA, where it nucleates assembly of the 50S subunit. The protein is Large ribosomal subunit protein uL3 of Exiguobacterium sp. (strain ATCC BAA-1283 / AT1b).